Reading from the N-terminus, the 396-residue chain is Elongation factor Tu (396 aa).

Positions 10 to 205 (KSHANIGTIG…AVDEYIPTPE (196 aa)) constitute a tr-type G domain. Residues 19–26 (GHVDHGKT) are G1. Position 19-26 (19-26 (GHVDHGKT)) interacts with GTP. Position 26 (Thr-26) interacts with Mg(2+). The interval 61 to 65 (GITIS) is G2. A G3 region spans residues 82 to 85 (DCPG). GTP contacts are provided by residues 82–86 (DCPGH) and 137–140 (NKCD). Residues 137–140 (NKCD) are G4. The interval 175–177 (SAL) is G5.

This sequence belongs to the TRAFAC class translation factor GTPase superfamily. Classic translation factor GTPase family. EF-Tu/EF-1A subfamily. As to quaternary structure, monomer.

It is found in the cytoplasm. It carries out the reaction GTP + H2O = GDP + phosphate + H(+). Functionally, GTP hydrolase that promotes the GTP-dependent binding of aminoacyl-tRNA to the A-site of ribosomes during protein biosynthesis. In Bacillus pumilus (strain SAFR-032), this protein is Elongation factor Tu.